The sequence spans 1159 residues: Ferroxidase HEPHL1 (1159 aa).

Residues 1–23 (MFLKQPGGCILLQFLGLLGLVGA) form the signal peptide. Plastocyanin-like domains lie at 24 to 206 (VTRT…LLVC), 217 to 365 (MRTD…VGNC), 378 to 560 (QRRY…LLVC), 570 to 718 (TQKG…ISSC), 730 to 906 (MLRT…LITC), and 914 to 1092 (KGRR…VPSQ). Residues 24–1114 (VTRTYYIGIV…KNLRPRGAKA (1091 aa)) are Extracellular-facing. Residues histidine 126 and histidine 128 each contribute to the Cu cation site. N-linked (GlcNAc...) asparagine glycosylation is present at asparagine 160. A disulfide bond links cysteine 180 and cysteine 206. Positions 186 and 188 each coordinate Cu cation. A glycan (N-linked (GlcNAc...) asparagine) is linked at asparagine 235. An intrachain disulfide couples cysteine 284 to cysteine 365. The Cu cation site is built by histidine 303, cysteine 346, and histidine 351. Residue asparagine 406 is glycosylated (N-linked (GlcNAc...) asparagine). A disulfide bond links cysteine 534 and cysteine 560. An N-linked (GlcNAc...) asparagine glycan is attached at asparagine 588. Cysteine 637 and cysteine 718 form a disulfide bridge. Residues histidine 656, cysteine 699, histidine 704, and methionine 709 each coordinate Cu cation. N-linked (GlcNAc...) asparagine glycosylation is present at asparagine 771. The cysteines at positions 880 and 906 are disulfide-linked. A glycan (N-linked (GlcNAc...) asparagine) is linked at asparagine 934. Cu cation-binding residues include histidine 1002, histidine 1005, histidine 1007, histidine 1047, cysteine 1048, histidine 1049, histidine 1053, and methionine 1058. The helical transmembrane segment at 1115–1135 (ALVILFILGLLLLVATVVLAL) threads the bilayer. The Cytoplasmic portion of the chain corresponds to 1136-1159 (RLRSSRRQMAYREVQSCALPTDAL).

It belongs to the multicopper oxidase family. Cu cation is required as a cofactor.

It localises to the membrane. The enzyme catalyses 4 Fe(2+) + O2 + 4 H(+) = 4 Fe(3+) + 2 H2O. Functionally, is a copper-binding glycoprotein with ferroxidase activity. It oxidizes Fe(2+) to Fe(3+) without releasing radical oxygen species. May be involved in the regulation of intracellular iron content. This chain is Ferroxidase HEPHL1 (Hephl1), found in Mus musculus (Mouse).